The primary structure comprises 178 residues: Large ribosomal subunit protein uL6 (178 aa).

The protein belongs to the universal ribosomal protein uL6 family. As to quaternary structure, part of the 50S ribosomal subunit.

In terms of biological role, this protein binds to the 23S rRNA, and is important in its secondary structure. It is located near the subunit interface in the base of the L7/L12 stalk, and near the tRNA binding site of the peptidyltransferase center. The protein is Large ribosomal subunit protein uL6 of Streptococcus sanguinis (strain SK36).